Consider the following 388-residue polypeptide: GTPase Obg (388 aa).

One can recognise an Obg domain in the interval 1 to 159 (MKFVDEATIR…RSLRLELMLL (159 aa)). The OBG-type G domain maps to 160-333 (ADVGLLGMPN…LALKLLDFID (174 aa)). GTP contacts are provided by residues 166–173 (GMPNAGKS), 191–195 (FTTLV), 213–216 (DIPG), 283–286 (NKAD), and 314–316 (SAY). Residues Ser173 and Thr193 each contribute to the Mg(2+) site. Residues 356 to 377 (QNANESVNEDYDDDLDDDDYDD) form a disordered region. The span at 362-377 (VNEDYDDDLDDDDYDD) shows a compositional bias: acidic residues.

Belongs to the TRAFAC class OBG-HflX-like GTPase superfamily. OBG GTPase family. In terms of assembly, monomer. Requires Mg(2+) as cofactor.

The protein resides in the cytoplasm. In terms of biological role, an essential GTPase which binds GTP, GDP and possibly (p)ppGpp with moderate affinity, with high nucleotide exchange rates and a fairly low GTP hydrolysis rate. Plays a role in control of the cell cycle, stress response, ribosome biogenesis and in those bacteria that undergo differentiation, in morphogenesis control. The polypeptide is GTPase Obg (Shewanella piezotolerans (strain WP3 / JCM 13877)).